The sequence spans 470 residues: BTB/POZ domain-containing protein 17 (470 aa).

An N-terminal signal peptide occupies residues 1–18 (MRMKGLYVVPLLLALVES). Residues 53–122 (SDTTLRIRTA…FYCGEISVNL (70 aa)) form the BTB domain. The BACK domain maps to 161 to 261 (VVSWYHYALR…ITPSQLFQIQ (101 aa)).

The protein localises to the secreted. The chain is BTB/POZ domain-containing protein 17 (btbd17) from Xenopus laevis (African clawed frog).